A 566-amino-acid chain; its full sequence is E3 ubiquitin-protein ligase RNF220 (566 aa).

Residue Lys-277 forms a Glycyl lysine isopeptide (Lys-Gly) (interchain with G-Cter in SUMO2) linkage. The interval 277-297 is disordered; that stretch reads KREGESPTASPHSSATDDLHH. Ser-390 carries the phosphoserine modification. Residues 485 to 513 are a coiled coil; it reads EDSAVTTFEALKARVRELERQLSRGDRYK. The segment at 514–522 is required for targeting to the cytoplasm; sequence CLICMDSYS. The segment at 514–553 adopts an RING-type zinc-finger fold; it reads CLICMDSYSMPLTSIQCWHVHCEECWLRTLGAKKLCPQCY.

As to quaternary structure, interacts with SIN3B. Interacts with CTNNB1 (via Armadillo repeats 2-8). Interacts with USP7 (via MATH domain). Post-translationally, auto-ubiquitinated; leads to proteasomal degradation.

The protein resides in the cytoplasm. The catalysed reaction is S-ubiquitinyl-[E2 ubiquitin-conjugating enzyme]-L-cysteine + [acceptor protein]-L-lysine = [E2 ubiquitin-conjugating enzyme]-L-cysteine + N(6)-ubiquitinyl-[acceptor protein]-L-lysine.. It functions in the pathway protein modification; protein ubiquitination. Functionally, E3 ubiquitin-protein ligase that promotes the ubiquitination and proteasomal degradation of SIN3B. Independently of its E3 ligase activity, acts as a CTNNB1 stabilizer through USP7-mediated deubiquitination of CTNNB1 promoting Wnt signaling. In Bos taurus (Bovine), this protein is E3 ubiquitin-protein ligase RNF220 (RNF220).